Here is an 866-residue protein sequence, read N- to C-terminus: Pentatricopeptide repeat-containing protein At1g15510, chloroplastic (866 aa).

Residues 1–52 (MASSAQSPHFYLNPGKSNSFQSKAYKQRNVNFYWNFGIRRLFLRKSQGLSVL) constitute a chloroplast transit peptide. PPR repeat units follow at residues 58–92 (STHFSNSQLHGLCANGKLEEAMKLLNSMQELRVAV), 93–123 (DEDVFVALVRLCEWKRAQEEGSKVYSIALSS), 128–158 (GVELGNAFLAMFVRFGNLVDAWYVFGKMSER), 159–194 (NLFSWNVLVGGYAKQGYFDEAMCLYHRMLWVGGVKP), 195–229 (DVYTFPCVLRTCGGIPDLARGKEVHVHVVRYGYEL), 230–260 (DIDVVNALITMYVKCGDVKSARLLFDRMPRR), 261–295 (DIISWNAMISGYFENGMCHEGLELFFAMRGLSVDP), 296–330 (DLMTLTSVISACELLGDRRLGRDIHAYVITTGFAV), 331–365 (DISVCNSLTQMYLNAGSWREAEKLFSRMERKDIVS), 366–396 (WTTMISGYEYNFLPDKAIDTYRMMDQDSVKP), 397–431 (DEITVAAVLSACATLGDLDTGVELHKLAIKARLIS), 432–466 (YVIVANNLINMYSKCKCIDKALDIFHNIPRKNVIS), 467–493 (WTSIIAGLRLNNRCFEALIFLRQMKMT), 497–531 (NAITLTAALAACARIGALMCGKEIHAHVLRTGVGL), 532–561 (DDFLPNALLDMYVRCGRMNTAWSQFNSQKK), 562–596 (DVTSWNILLTGYSERGQGSMVVELFDRMVKSRVRP), 597–631 (DEITFISLLCGCSKSQMVRQGLMYFSKMEDYGVTP), and 632–662 (NLKHYACVVDLLGRAGELQEAHKFIQKMPVT). The tract at residues 667–742 (VWGALLNACR…DAGCSWVEVK (76 aa)) is type E motif. The interval 743 to 773 (GKVHAFLSDDKYHPQTKEINTVLEGFYEKMS) is type E(+) motif. The tract at residues 774-866 (EVGLTKISES…FKDGECSCGD (93 aa)) is type DYW motif.

This sequence belongs to the PPR family. PCMP-H subfamily.

It is found in the plastid. The protein resides in the chloroplast. Regulates the RNA editing of the chloroplast transcript accD, and is essential for the early stages of chloroplast biogenesis. Required for the RNA editing of the chloroplast transcript ndhF. This is Pentatricopeptide repeat-containing protein At1g15510, chloroplastic (PCMP-H73) from Arabidopsis thaliana (Mouse-ear cress).